Reading from the N-terminus, the 287-residue chain is RNA polymerase sigma factor RpoH (287 aa).

Residues 54-123 form a sigma-70 factor domain-2 region; that stretch reads LILSHLRFVI…IHEYVLRNWR (70 aa). The Interaction with polymerase core subunit RpoC signature appears at 78–81; sequence DLIQ. Residues 230–283 are sigma-70 factor domain-4; it reads ALSSLDERSRNIIHARWLDDSDHKMTLREIAHNYGISAERVRQLEKNAMKKLKV. Positions 256 to 275 form a DNA-binding region, H-T-H motif; it reads LREIAHNYGISAERVRQLEK.

The protein belongs to the sigma-70 factor family. RpoH subfamily. As to quaternary structure, interacts with the RNA polymerase core enzyme.

The protein localises to the cytoplasm. Its function is as follows. Sigma factors are initiation factors that promote the attachment of RNA polymerase to specific initiation sites and are then released. This sigma factor is involved in regulation of expression of heat shock genes. The sequence is that of RNA polymerase sigma factor RpoH from Buchnera aphidicola subsp. Baizongia pistaciae (strain Bp).